Consider the following 239-residue polypeptide: Ribosomal RNA small subunit methyltransferase G (239 aa).

S-adenosyl-L-methionine-binding positions include G78, F83, 129–130, and R148; that span reads AE.

It belongs to the methyltransferase superfamily. RNA methyltransferase RsmG family.

It localises to the cytoplasm. Its function is as follows. Specifically methylates the N7 position of a guanine in 16S rRNA. In Alkaliphilus metalliredigens (strain QYMF), this protein is Ribosomal RNA small subunit methyltransferase G.